We begin with the raw amino-acid sequence, 269 residues long: Tryptophan synthase alpha chain (269 aa).

Catalysis depends on proton acceptor residues Glu45 and Asp56.

This sequence belongs to the TrpA family. As to quaternary structure, tetramer of two alpha and two beta chains.

It carries out the reaction (1S,2R)-1-C-(indol-3-yl)glycerol 3-phosphate + L-serine = D-glyceraldehyde 3-phosphate + L-tryptophan + H2O. Its pathway is amino-acid biosynthesis; L-tryptophan biosynthesis; L-tryptophan from chorismate: step 5/5. Its function is as follows. The alpha subunit is responsible for the aldol cleavage of indoleglycerol phosphate to indole and glyceraldehyde 3-phosphate. In Shouchella clausii (strain KSM-K16) (Alkalihalobacillus clausii), this protein is Tryptophan synthase alpha chain.